Here is a 237-residue protein sequence, read N- to C-terminus: 1-(5-phosphoribosyl)-5-[(5-phosphoribosylamino)methylideneamino] imidazole-4-carboxamide isomerase (237 aa).

The Proton acceptor role is filled by Asp8. Asp130 serves as the catalytic Proton donor.

Belongs to the HisA/HisF family.

It localises to the cytoplasm. The enzyme catalyses 1-(5-phospho-beta-D-ribosyl)-5-[(5-phospho-beta-D-ribosylamino)methylideneamino]imidazole-4-carboxamide = 5-[(5-phospho-1-deoxy-D-ribulos-1-ylimino)methylamino]-1-(5-phospho-beta-D-ribosyl)imidazole-4-carboxamide. The protein operates within amino-acid biosynthesis; L-histidine biosynthesis; L-histidine from 5-phospho-alpha-D-ribose 1-diphosphate: step 4/9. In Halothermothrix orenii (strain H 168 / OCM 544 / DSM 9562), this protein is 1-(5-phosphoribosyl)-5-[(5-phosphoribosylamino)methylideneamino] imidazole-4-carboxamide isomerase.